A 329-amino-acid chain; its full sequence is Glycerol-3-phosphate dehydrogenase [NAD(P)+] (329 aa).

3 residues coordinate NADPH: tryptophan 11, arginine 30, and lysine 103. Sn-glycerol 3-phosphate-binding residues include lysine 103, glycine 132, and serine 134. Residue alanine 136 coordinates NADPH. 5 residues coordinate sn-glycerol 3-phosphate: lysine 187, aspartate 240, serine 250, arginine 251, and asparagine 252. Catalysis depends on lysine 187, which acts as the Proton acceptor. Arginine 251 is a binding site for NADPH. Residues valine 275 and glutamate 277 each coordinate NADPH.

The protein belongs to the NAD-dependent glycerol-3-phosphate dehydrogenase family.

The protein resides in the cytoplasm. The enzyme catalyses sn-glycerol 3-phosphate + NAD(+) = dihydroxyacetone phosphate + NADH + H(+). It catalyses the reaction sn-glycerol 3-phosphate + NADP(+) = dihydroxyacetone phosphate + NADPH + H(+). It participates in membrane lipid metabolism; glycerophospholipid metabolism. Catalyzes the reduction of the glycolytic intermediate dihydroxyacetone phosphate (DHAP) to sn-glycerol 3-phosphate (G3P), the key precursor for phospholipid synthesis. This is Glycerol-3-phosphate dehydrogenase [NAD(P)+] from Methylobacillus flagellatus (strain ATCC 51484 / DSM 6875 / VKM B-1610 / KT).